A 634-amino-acid chain; its full sequence is uncharacterized protein (634 aa).

A signal peptide spans 1–40 (MWLQQRLKGLPGLLSSSWARRLLCLLGLLVLLLWFASSGA). At 41-589 (RRAAGGLHLP…DEHMAQQDPG (549 aa)) the chain is on the extracellular side. N363 carries N-linked (GlcNAc...) asparagine glycosylation. Residues 590-610 (LPFLFWFSVASLITLFHLFLF) traverse the membrane as a helical segment. Topologically, residues 611 to 634 (KLIYNEYCGPGAKPLFRSKEDPSV) are cytoplasmic.

The protein localises to the membrane. This is an uncharacterized protein from Mus musculus (Mouse).